The following is a 463-amino-acid chain: Nucleobindin-1 (463 aa).

An N-terminal signal peptide occupies residues 1-26 (MPPSGPQGTLLLLPLLLLLLLRAVLA). A Phosphoserine modification is found at Ser-86. Thr-148 bears the Phosphothreonine mark. Residues 150–218 (EARDLELLIQ…QQRRHREHPK (69 aa)) are a coiled coil. A DNA-binding region spans residues 172-218 (HHEEFKRYEMLKEHERRRYLESLGEEQRKEAERRLEEQQRRHREHPK). Positions 193-210 (SLGEEQRKEAERRLEEQQ) are enriched in basic and acidic residues. The segment at 193–221 (SLGEEQRKEAERRLEEQQRRHREHPKVNV) is disordered. The interval 228-321 (LKEVWEELDG…VTLGEFLAST (94 aa)) is binds to GNAI2 and GNAI3. 2 consecutive EF-hand domains span residues 240 to 275 (PNRFNPKTFFILHDINSDGVLDEQELEALFTKELEK) and 292 to 327 (ERLRMREHVMKNVDTNQDRLVTLGEFLASTQRKEFG). Asp-253, Asn-255, Asp-257, Glu-264, Asp-305, Asn-307, Asp-309, and Glu-316 together coordinate Ca(2+). Residues 303-333 (NVDTNQDRLVTLGEFLASTQRKEFGDTGEGW) carry the GBA motif. A coiled-coil region spans residues 341–409 (AYTEEELRRF…KQQQQQQQQQ (69 aa)). The tract at residues 368 to 463 (LSQETEALGR…LPEVEVPQHL (96 aa)) is disordered. The residue at position 369 (Ser-369) is a Phosphoserine. A compositionally biased stretch (basic and acidic residues) spans 439 to 463 (DQKEVDTSEKKLLERLPEVEVPQHL).

It belongs to the nucleobindin family. Interacts (via GBA motif) with guanine nucleotide-binding protein G(i) alpha subunits GNAI1, GNAI2 and GNAI3 with higher affinity for GNAI1 and GNAI3 than for GNAI2. Preferentially interacts with inactive rather than active GNAI3. Interaction with GNAI3 is inhibited when NUCB1 binds calcium, probably due to a conformational change which renders the GBA motif inaccessible.

Its subcellular location is the golgi apparatus. It is found in the cis-Golgi network membrane. The protein localises to the cytoplasm. The protein resides in the secreted. Major calcium-binding protein of the Golgi which may have a role in calcium homeostasis. Acts as a non-receptor guanine nucleotide exchange factor which binds to and activates alpha subunits of guanine nucleotide-binding proteins (G proteins). The chain is Nucleobindin-1 (NUCB1) from Pongo abelii (Sumatran orangutan).